The sequence spans 946 residues: Calcium-transporting ATPase type 2C member 2 (946 aa).

Residues 1–106 (MVEGRVSEFL…DNSEPVWKKY (106 aa)) lie on the Cytoplasmic side of the membrane. The tract at residues 71–95 (VDLHTGLSEFSVTQRRLAHGWNEFV) is interaction with ORAI1. A helical membrane pass occupies residues 107–127 (LDQFKNPLILLLLGSALVSVL). The Extracellular segment spans residues 128–129 (TK). A helical transmembrane segment spans residues 130–150 (EYEDAVSIATAVLVVVTVAFI). Residues 151 to 231 (QEYRSEKSLE…EAEPCSKTDS (81 aa)) are Cytoplasmic-facing. The helical transmembrane segment at 232-252 (PLTGGGDLTTLSNIVFMGTLV) threads the bilayer. Residues 253–293 (QYGRGQGVVIGTGESSQFGEVFKMMQAEETPKTPLQKSMDR) lie on the Extracellular side of the membrane. Thr-264 bears the Phosphothreonine mark. Phosphoserine is present on residues Ser-267 and Ser-268. Residues 294-314 (LGKQLTLFSFGIIGLIMLIGW) traverse the membrane as a helical segment. Residues 315-331 (SQGKQLLSMFTIGVSLA) are Cytoplasmic-facing. The Ca(2+) site is built by Val-332, Ala-333, Ile-335, and Glu-337. A helical transmembrane segment spans residues 332–352 (VAAIPEGLPIVVMVTLVLGVL). Topologically, residues 353 to 750 (RMAKKRVIVK…ISALSLITLS (398 aa)) are extracellular. The 4-aspartylphosphate intermediate role is filled by Asp-379. Mg(2+) is bound by residues Asp-674 and Asp-678. Residues 751–771 (TVFNLPSPLNAMQILWINIIM) traverse the membrane as a helical segment. Asn-768 and Asp-772 together coordinate Ca(2+). Over 772–804 (DGPPAQSLGVEPVDKDAFRQPPRSVRDTILSRA) the chain is Cytoplasmic. Residues 805-825 (LILKILMSAAIIISGTLFIFW) traverse the membrane as a helical segment. Residues 826–837 (KEMPEDRASTPR) are Extracellular-facing. Residues 838-855 (TTTMTFTCFVFFDLFNAL) traverse the membrane as a helical segment. Topologically, residues 856–874 (TCRSQTKLIFEIGFLRNHM) are cytoplasmic. Residues 875–895 (FLYSVLGSILGQLAVIYIPPL) form a helical membrane-spanning segment. Over 896–905 (QRVFQTENLG) the chain is Extracellular. Residues 906–926 (ALDLLFLTGLASSVFILSELL) traverse the membrane as a helical segment. Residues 927-946 (KLCEKYCCSPKRVQMHPEDV) are Cytoplasmic-facing.

It belongs to the cation transport ATPase (P-type) (TC 3.A.3) family. Type IIA subfamily. Interacts (via N-terminus) with ORAI1 (via N- and C-termini); this interaction regulates Ca(2+) influx at the plasma membrane. As to expression, highly expressed in the gastrointestinal and respiratory tracts, prostate, thyroid, salivary, and mammary glands. Expressed in colon epithelial cells (at protein level). Expressed in brain and testis (at protein level).

The protein localises to the golgi apparatus. The protein resides in the trans-Golgi network membrane. It is found in the cell membrane. It localises to the basolateral cell membrane. The enzyme catalyses Ca(2+)(in) + ATP + H2O = Ca(2+)(out) + ADP + phosphate + H(+). It carries out the reaction Mn(2+)(in) + ATP + H2O = Mn(2+)(out) + ADP + phosphate + H(+). Its function is as follows. ATP-driven pump that supplies the Golgi apparatus with Ca(2+) and Mn(2+) ions, both essential cofactors for processing and trafficking of newly synthesized proteins in the secretory pathway. Within a catalytic cycle, acquires Ca(2+) or Mn(2+) ions on the cytoplasmic side of the membrane and delivers them to the lumenal side. The transfer of ions across the membrane is coupled to ATP hydrolysis and is associated with a transient phosphorylation that shifts the pump conformation from inward-facing to outward-facing state. Induces Ca(2+) influx independently of its ATP-driven pump function. At the basolateral membrane of mammary epithelial cells, interacts with Ca(2+) channel ORAI1 and mediates Ca(2+) entry independently of the Ca(2+) content of endoplasmic reticulum or Golgi stores. May facilitate transepithelial transport of large quantities of Ca(2+) for milk secretion via activation of Ca(2+) influx channels at the plasma membrane and active Ca(2+) transport at the Golgi apparatus. The protein is Calcium-transporting ATPase type 2C member 2 of Homo sapiens (Human).